A 528-amino-acid polypeptide reads, in one-letter code: U3 small nucleolar RNA-associated protein 15 homolog (528 aa).

Residue Ala2 is modified to N-acetylalanine. WD repeat units follow at residues Lys36–Thr75, Arg78–Gln117, Gly120–Thr159, Glu162–Cys202, Glu204–Val242, Asn246–Ser285, and Asp287–Ser326. Lys249 participates in a covalent cross-link: Glycyl lysine isopeptide (Lys-Gly) (interchain with G-Cter in SUMO2). Residues Ala508–Ser528 are disordered. The span at Pro511–Ser528 shows a compositional bias: basic and acidic residues.

In terms of assembly, part of the small subunit (SSU) processome, composed of more than 70 proteins and the RNA chaperone small nucleolar RNA (snoRNA) U3. May be a component of the proposed t-UTP subcomplex of the ribosomal small subunit (SSU) processome containing at least UTP4, WDR43, HEATR1, UTP15, WDR75. Interacts directly with UTP4 and WDR43.

It is found in the nucleus. Its subcellular location is the nucleolus. In terms of biological role, ribosome biogenesis factor. Involved in nucleolar processing of pre-18S ribosomal RNA. Required for optimal pre-ribosomal RNA transcription by RNA polymerase I. Part of the small subunit (SSU) processome, first precursor of the small eukaryotic ribosomal subunit. During the assembly of the SSU processome in the nucleolus, many ribosome biogenesis factors, an RNA chaperone and ribosomal proteins associate with the nascent pre-rRNA and work in concert to generate RNA folding, modifications, rearrangements and cleavage as well as targeted degradation of pre-ribosomal RNA by the RNA exosome. This is U3 small nucleolar RNA-associated protein 15 homolog from Rattus norvegicus (Rat).